The sequence spans 703 residues: uncharacterized protein (703 aa).

Helical transmembrane passes span isoleucine 23–isoleucine 43, alanine 69–glycine 89, proline 143–alanine 163, and proline 250–leucine 270. Residues isoleucine 23–arginine 335 form the PNPLA domain. Residues glycine 72 to glycine 76 carry the GXSXG motif. The active-site Nucleophile is the serine 74. Aspartate 322 (proton acceptor) is an active-site residue. Positions aspartate 322–glycine 324 match the DGA/G motif. 3 helical membrane-spanning segments follow: residues valine 357–leucine 377, glutamate 432–phenylalanine 452, and isoleucine 644–threonine 664.

It localises to the cell membrane. This is an uncharacterized protein from Sinorhizobium fredii (strain NBRC 101917 / NGR234).